The following is a 101-amino-acid chain: MAKSSMKAREAKRAKLVAKFAEKRLALKAIISSPTTSDEDRWDAVLKLQALPRDSSSARQRNRCSQTGRPHGFLRKFGLSRIKLREATMRGEVPGLRKASW.

It belongs to the universal ribosomal protein uS14 family. As to quaternary structure, part of the 30S ribosomal subunit. Contacts proteins S3 and S10.

Binds 16S rRNA, required for the assembly of 30S particles and may also be responsible for determining the conformation of the 16S rRNA at the A site. The polypeptide is Small ribosomal subunit protein uS14 (Shewanella piezotolerans (strain WP3 / JCM 13877)).